Reading from the N-terminus, the 313-residue chain is Protein HEXIM2 (313 aa).

Positions 1-13 (MATVNHTNCNTAS) are enriched in polar residues. Positions 1–78 (MATVNHTNCN…RGSRTQSPGG (78 aa)) are disordered. Phosphoserine is present on residues Ser-28, Ser-52, Ser-75, and Ser-80. Positions 64–77 (SSCNIRGSRTQSPG) are enriched in polar residues. 3 disordered regions span residues 111–139 (EKQQRDERQSQRASRVREEMFAKGQPLAP), 155–194 (PNLDVLHGPSHSGSGGENEAGDSDGQGRAHGEFQQRDFSE), and 267–313 (QENE…AGDR). The span at 112-131 (KQQRDERQSQRASRVREEMF) shows a compositional bias: basic and acidic residues. The interaction with P-TEFb stretch occupies residues 139-142 (PYNT). Positions 179 to 194 (GQGRAHGEFQQRDFSE) are enriched in basic and acidic residues. Residues 207-276 (RSKQELVRDY…QENEMWNREG (70 aa)) are a coiled coil. The tract at residues 225–286 (QAEQETRRLR…GYCDQEKPAS (62 aa)) is interaction with CCNT1, HEXIM1 and HEXIM2.

The protein belongs to the HEXIM family. Homooligomer and heterooligomer with HEXIM1; probably dimeric. Core component of the 7SK RNP complex, at least composed of 7SK RNA, LARP7, MEPCE, HEXIM1 (or HEXIM2) and P-TEFb (composed of CDK9 and CCNT1/cyclin-T1). Interacts with CCNT2.

Its subcellular location is the nucleus. Its function is as follows. Transcriptional regulator which functions as a general RNA polymerase II transcription inhibitor. Core component of the 7SK RNP complex: in cooperation with 7SK snRNA sequesters P-TEFb in a large inactive 7SK snRNP complex preventing RNA polymerase II phosphorylation and subsequent transcriptional elongation. In Mus musculus (Mouse), this protein is Protein HEXIM2 (Hexim2).